A 376-amino-acid polypeptide reads, in one-letter code: Queuine tRNA-ribosyltransferase (376 aa).

Catalysis depends on Asp-92, which acts as the Proton acceptor. Substrate contacts are provided by residues 92-96 (DSGGF), Asp-146, Gln-190, and Gly-217. Positions 248 to 254 (GVGRPED) are RNA binding. The Nucleophile role is filled by Asp-267. Positions 272-276 (TRNAR) are RNA binding; important for wobble base 34 recognition. Zn(2+) is bound by residues Cys-305, Cys-307, Cys-310, and His-337.

The protein belongs to the queuine tRNA-ribosyltransferase family. In terms of assembly, homodimer. Within each dimer, one monomer is responsible for RNA recognition and catalysis, while the other monomer binds to the replacement base PreQ1. Requires Zn(2+) as cofactor.

The catalysed reaction is 7-aminomethyl-7-carbaguanine + guanosine(34) in tRNA = 7-aminomethyl-7-carbaguanosine(34) in tRNA + guanine. It participates in tRNA modification; tRNA-queuosine biosynthesis. Functionally, catalyzes the base-exchange of a guanine (G) residue with the queuine precursor 7-aminomethyl-7-deazaguanine (PreQ1) at position 34 (anticodon wobble position) in tRNAs with GU(N) anticodons (tRNA-Asp, -Asn, -His and -Tyr). Catalysis occurs through a double-displacement mechanism. The nucleophile active site attacks the C1' of nucleotide 34 to detach the guanine base from the RNA, forming a covalent enzyme-RNA intermediate. The proton acceptor active site deprotonates the incoming PreQ1, allowing a nucleophilic attack on the C1' of the ribose to form the product. After dissociation, two additional enzymatic reactions on the tRNA convert PreQ1 to queuine (Q), resulting in the hypermodified nucleoside queuosine (7-(((4,5-cis-dihydroxy-2-cyclopenten-1-yl)amino)methyl)-7-deazaguanosine). The polypeptide is Queuine tRNA-ribosyltransferase (Stenotrophomonas maltophilia (strain R551-3)).